A 144-amino-acid chain; its full sequence is Large ribosomal subunit protein uL15 (144 aa).

The span at 1 to 10 (MYLNTISPSR) shows a compositional bias: polar residues. Residues 1–51 (MYLNTISPSRGSKHLSKRVGRGIGSGLGKTGGRGHKGQKSRSGGKVRLGFE) form a disordered region. Residues 11 to 20 (GSKHLSKRVG) show a composition bias toward basic residues. Gly residues predominate over residues 21–31 (RGIGSGLGKTG). A compositionally biased stretch (basic residues) spans 32-44 (GRGHKGQKSRSGG).

This sequence belongs to the universal ribosomal protein uL15 family. Part of the 50S ribosomal subunit.

Functionally, binds to the 23S rRNA. This is Large ribosomal subunit protein uL15 from Blochmanniella pennsylvanica (strain BPEN).